We begin with the raw amino-acid sequence, 208 residues long: ATP synthase subunit beta, chloroplastic (208 aa).

This sequence belongs to the ATPase alpha/beta chains family. F-type ATPases have 2 components, CF(1) - the catalytic core - and CF(0) - the membrane proton channel. CF(1) has five subunits: alpha(3), beta(3), gamma(1), delta(1), epsilon(1). CF(0) has four main subunits: a(1), b(1), b'(1) and c(9-12).

It is found in the plastid. The protein localises to the chloroplast thylakoid membrane. It carries out the reaction ATP + H2O + 4 H(+)(in) = ADP + phosphate + 5 H(+)(out). Produces ATP from ADP in the presence of a proton gradient across the membrane. The catalytic sites are hosted primarily by the beta subunits. The protein is ATP synthase subunit beta, chloroplastic (atpB) of Lonchitis hirsuta (Tomato fern).